Consider the following 285-residue polypeptide: Iodotyrosine deiodinase 1 (285 aa).

Residues 1–21 (MFLLTPVLVAVVCILVVWVFK) form a helical membrane-spanning segment. Residues 96-100 (RRSVR) and 124-125 (SG) contribute to the FMN site. 4 residues coordinate 3,5-diiodo-L-tyrosine: alanine 126, glutamate 153, tyrosine 157, and lysine 178. 4 residues coordinate 3-iodo-L-tyrosine: alanine 126, glutamate 153, tyrosine 157, and lysine 178. FMN-binding positions include 233–235 (TTT) and arginine 275.

Belongs to the nitroreductase family. As to quaternary structure, homodimer. It depends on FMN as a cofactor.

It localises to the cell membrane. The protein resides in the cytoplasmic vesicle membrane. It carries out the reaction 2 iodide + L-tyrosine + 2 NADP(+) = 3,5-diiodo-L-tyrosine + 2 NADPH + H(+). The catalysed reaction is iodide + L-tyrosine + NADP(+) = 3-iodo-L-tyrosine + NADPH. It catalyses the reaction 3-iodo-L-tyrosine + iodide + NADP(+) = 3,5-diiodo-L-tyrosine + NADPH + H(+). The enzyme catalyses L-tyrosine + chloride + NADP(+) = 3-chloro-L-tyrosine + NADPH. It carries out the reaction bromide + L-tyrosine + NADP(+) = 3-bromo-L-tyrosine + NADPH. Functionally, catalyzes the dehalogenation of halotyrosines such as 3-bromo-L-tyrosine, 3-chloro-L-tyrosine, 3-iodo-L-tyrosine and 3,5-diiodo-L-tyrosine. During thyroid hormone biosynthesis, facilitates iodide salvage by catalysing the oxidative NADPH-dependent deiodination of the halogenated by-products of thyroid hormone production, monoiodotyrosine (L-MIT) and diiodotyrosine (L-DIT). The scavanged iodide can then reenter the hormone-producing pathways. Acts more efficiently on 3-iodo-L-tyrosine than 3,5-diiodo-L-tyrosine. This chain is Iodotyrosine deiodinase 1 (Iyd), found in Mus musculus (Mouse).